We begin with the raw amino-acid sequence, 486 residues long: Membrane-bound lytic murein transglycosylase F (486 aa).

Positions 1-26 (MFSPMALRPRCAKWLIVTGLFLMLGA) are cleaved as a signal peptide. The tract at residues 27–267 (CVEKPSTLER…RLKDRYYGHV (241 aa)) is non-LT domain. The interval 268-486 (DVLGYVGAYT…TKPPEENPPL (219 aa)) is LT domain. The active site involves Glu314. Residues 464 to 486 (VAEGNLHVPGVNKTKPPEENPPL) form a disordered region.

It in the N-terminal section; belongs to the bacterial solute-binding protein 3 family. This sequence in the C-terminal section; belongs to the transglycosylase Slt family.

It localises to the cell outer membrane. The catalysed reaction is Exolytic cleavage of the (1-&gt;4)-beta-glycosidic linkage between N-acetylmuramic acid (MurNAc) and N-acetylglucosamine (GlcNAc) residues in peptidoglycan, from either the reducing or the non-reducing ends of the peptidoglycan chains, with concomitant formation of a 1,6-anhydrobond in the MurNAc residue.. Its function is as follows. Murein-degrading enzyme that degrades murein glycan strands and insoluble, high-molecular weight murein sacculi, with the concomitant formation of a 1,6-anhydromuramoyl product. Lytic transglycosylases (LTs) play an integral role in the metabolism of the peptidoglycan (PG) sacculus. Their lytic action creates space within the PG sacculus to allow for its expansion as well as for the insertion of various structures such as secretion systems and flagella. This is Membrane-bound lytic murein transglycosylase F from Pseudomonas fluorescens (strain ATCC BAA-477 / NRRL B-23932 / Pf-5).